We begin with the raw amino-acid sequence, 122 residues long: Prefoldin subunit 1 (122 aa).

It belongs to the prefoldin subunit beta family. Heterohexamer of two PFD-alpha type and four PFD-beta type subunits.

Binds specifically to cytosolic chaperonin (c-CPN) and transfers target proteins to it. Binds to nascent polypeptide chain and promotes folding in an environment in which there are many competing pathways for nonnative proteins. In Tetraodon nigroviridis (Spotted green pufferfish), this protein is Prefoldin subunit 1 (pfdn1).